A 153-amino-acid chain; its full sequence is Allergen Pet c 1 (153 aa).

It belongs to the BetVI family. May form dimers.

The protein is Allergen Pet c 1 of Petroselinum crispum (Parsley).